The chain runs to 450 residues: Asparagine--tRNA ligase (450 aa).

This sequence belongs to the class-II aminoacyl-tRNA synthetase family. As to quaternary structure, homodimer.

It localises to the cytoplasm. It catalyses the reaction tRNA(Asn) + L-asparagine + ATP = L-asparaginyl-tRNA(Asn) + AMP + diphosphate + H(+). The sequence is that of Asparagine--tRNA ligase from Enterococcus faecalis (strain ATCC 700802 / V583).